A 102-amino-acid chain; its full sequence is NADH-quinone oxidoreductase subunit K (102 aa).

3 helical membrane passes run 5–25, 30–50, and 63–83; these read ALTG…FGVL, ILFQ…AFIA, and MFVL…ALFL.

Belongs to the complex I subunit 4L family. As to quaternary structure, NDH-1 is composed of 14 different subunits. Subunits NuoA, H, J, K, L, M, N constitute the membrane sector of the complex.

Its subcellular location is the cell inner membrane. It carries out the reaction a quinone + NADH + 5 H(+)(in) = a quinol + NAD(+) + 4 H(+)(out). Functionally, NDH-1 shuttles electrons from NADH, via FMN and iron-sulfur (Fe-S) centers, to quinones in the respiratory chain. The immediate electron acceptor for the enzyme in this species is believed to be ubiquinone. Couples the redox reaction to proton translocation (for every two electrons transferred, four hydrogen ions are translocated across the cytoplasmic membrane), and thus conserves the redox energy in a proton gradient. The protein is NADH-quinone oxidoreductase subunit K of Rhodopseudomonas palustris (strain BisB18).